Consider the following 155-residue polypeptide: MKVASGSTATAAAGPSCALKAGKTASGAGEVVRCLSEQSVAISRCAGGAGARLPALLDEQQVNVLLYDMNGCYSRLKELVPTLPQNRKVSKVEILQHVIDYIRDLQLELNSESEVGTPGGRGLPVRAPLSTLNGEISALTAEAACVPADDRILCR.

The bHLH domain occupies 53-105 (LPALLDEQQVNVLLYDMNGCYSRLKELVPTLPQNRKVSKVEILQHVIDYIRDL). The Nuclear export signal motif lies at 98–111 (VIDYIRDLQLELNS).

Heterodimer with other HLH proteins. Interacts with COPS5, IFI204, GATA4 and NKX2-5. Interacts with CLOCK and BMAL1.

The protein localises to the cytoplasm. Its subcellular location is the nucleus. Transcriptional regulator (lacking a basic DNA binding domain) which negatively regulates the basic helix-loop-helix (bHLH) transcription factors by forming heterodimers and inhibiting their DNA binding and transcriptional activity. Implicated in regulating a variety of cellular processes, including cellular growth, senescence, differentiation, apoptosis, angiogenesis, and neoplastic transformation. Inhibits skeletal muscle and cardiac myocyte differentiation. Regulates the circadian clock by repressing the transcriptional activator activity of the CLOCK-BMAL1 heterodimer. The polypeptide is DNA-binding protein inhibitor ID-1 (ID1) (Homo sapiens (Human)).